The primary structure comprises 354 residues: Protein Wnt-11 (354 aa).

The first 24 residues, 1 to 24, serve as a signal peptide directing secretion; it reads MKPSPQFFLAAFLSLILQTGICYG. N-linked (GlcNAc...) asparagine glycosylation is found at Asn40 and Asn90. 11 disulfide bridges follow: Cys80/Cys91, Cys130/Cys138, Cys140/Cys157, Cys209/Cys223, Cys211/Cys218, Cys283/Cys314, Cys299/Cys309, Cys313/Cys353, Cys329/Cys344, Cys331/Cys341, and Cys336/Cys337. A lipid anchor (O-palmitoleoyl serine; by PORCN) is attached at Ser215. Residues Asn300 and Asn304 are each glycosylated (N-linked (GlcNAc...) asparagine).

The protein belongs to the Wnt family. Palmitoleoylation is required for efficient binding to frizzled receptors. Depalmitoleoylation leads to Wnt signaling pathway inhibition. As to expression, expressed in the dermatome. The expression domain is mutually exclusive to the other Wnt genes.

Its subcellular location is the secreted. It is found in the extracellular space. The protein localises to the extracellular matrix. Ligand for members of the frizzled family of seven transmembrane receptors. May play a role in the formation of dermal structure, both limb and feather buds. Is likely to signal over only few cell diameters. This chain is Protein Wnt-11 (WNT11), found in Gallus gallus (Chicken).